We begin with the raw amino-acid sequence, 429 residues long: D-inositol 3-phosphate glycosyltransferase (429 aa).

His-20 contributes to the 1D-myo-inositol 3-phosphate binding site. UDP-N-acetyl-alpha-D-glucosamine contacts are provided by residues 26-27 and Gly-34; that span reads QP. 1D-myo-inositol 3-phosphate-binding positions include 31-36, Lys-89, Tyr-122, Thr-146, and Arg-166; that span reads DAGGMN. Arg-240, Lys-245, and Gln-306 together coordinate UDP-N-acetyl-alpha-D-glucosamine. Mg(2+)-binding residues include Tyr-315, Arg-316, and Ala-318. Residues Glu-328 and Glu-336 each coordinate UDP-N-acetyl-alpha-D-glucosamine. Thr-342 serves as a coordination point for Mg(2+).

This sequence belongs to the glycosyltransferase group 1 family. MshA subfamily. In terms of assembly, homodimer.

It catalyses the reaction 1D-myo-inositol 3-phosphate + UDP-N-acetyl-alpha-D-glucosamine = 1D-myo-inositol 2-acetamido-2-deoxy-alpha-D-glucopyranoside 3-phosphate + UDP + H(+). In terms of biological role, catalyzes the transfer of a N-acetyl-glucosamine moiety to 1D-myo-inositol 3-phosphate to produce 1D-myo-inositol 2-acetamido-2-deoxy-glucopyranoside 3-phosphate in the mycothiol biosynthesis pathway. This is D-inositol 3-phosphate glycosyltransferase from Nocardiopsis dassonvillei (strain ATCC 23218 / DSM 43111 / CIP 107115 / JCM 7437 / KCTC 9190 / NBRC 14626 / NCTC 10488 / NRRL B-5397 / IMRU 509) (Actinomadura dassonvillei).